Reading from the N-terminus, the 37-residue chain is M-oxotoxin-Ot2d (37 aa).

As to expression, expressed by the venom gland.

It localises to the secreted. Disrupts biological membranes, particularly those rich in phosphocholine. Has antimicrobial activity against Gram-negative bacterium E.coli, Gram-positive bacteria B.subtilis and S.aureus, and hemolytic activity against sheep, pig and guinea pig red blood cells. Has insecticidal activity against S.frugiperda ovarian cells by opening non-selective ion channels. Enhances the insecticidal activity of spider venom neurotoxic peptides. The chain is M-oxotoxin-Ot2d from Oxyopes takobius (Lynx spider).